Reading from the N-terminus, the 309-residue chain is Probable manganese-dependent inorganic pyrophosphatase (309 aa).

Residues histidine 9, aspartate 13, aspartate 15, aspartate 75, histidine 97, and aspartate 149 each contribute to the Mn(2+) site.

It belongs to the PPase class C family. It depends on Mn(2+) as a cofactor.

Its subcellular location is the cytoplasm. It carries out the reaction diphosphate + H2O = 2 phosphate + H(+). This chain is Probable manganese-dependent inorganic pyrophosphatase, found in Bacillus cereus (strain G9842).